The chain runs to 119 residues: Ribonuclease P protein component (119 aa).

This sequence belongs to the RnpA family. As to quaternary structure, consists of a catalytic RNA component (M1 or rnpB) and a protein subunit.

The catalysed reaction is Endonucleolytic cleavage of RNA, removing 5'-extranucleotides from tRNA precursor.. Its function is as follows. RNaseP catalyzes the removal of the 5'-leader sequence from pre-tRNA to produce the mature 5'-terminus. It can also cleave other RNA substrates such as 4.5S RNA. The protein component plays an auxiliary but essential role in vivo by binding to the 5'-leader sequence and broadening the substrate specificity of the ribozyme. In Pectobacterium atrosepticum (strain SCRI 1043 / ATCC BAA-672) (Erwinia carotovora subsp. atroseptica), this protein is Ribonuclease P protein component.